Consider the following 319-residue polypeptide: uncharacterized protein (319 aa).

The region spanning 36 to 178 (IIEFLLSFKG…MTVIHEERGF (143 aa)) is the SIS domain. An ATP-binding site is contributed by 51-56 (GIGKSG). CBS domains follow at residues 203–263 (MRSG…HLKT) and 268–319 (MTKN…MGVS).

It belongs to the SIS family. GutQ/KpsF subfamily.

This is an uncharacterized protein from Rickettsia prowazekii (strain Madrid E).